We begin with the raw amino-acid sequence, 306 residues long: tRNA pseudouridine synthase B (306 aa).

D48 (nucleophile) is an active-site residue.

It belongs to the pseudouridine synthase TruB family. Type 1 subfamily.

It carries out the reaction uridine(55) in tRNA = pseudouridine(55) in tRNA. Responsible for synthesis of pseudouridine from uracil-55 in the psi GC loop of transfer RNAs. The protein is tRNA pseudouridine synthase B of Chromobacterium violaceum (strain ATCC 12472 / DSM 30191 / JCM 1249 / CCUG 213 / NBRC 12614 / NCIMB 9131 / NCTC 9757 / MK).